The chain runs to 289 residues: Deleted in azoospermia-like (289 aa).

The tract at residues 1–20 (MSANAEAQCGSISEDNTHSS) is disordered. Residues 36–117 (NTVFVGGIDI…PAIRKQQNLC (82 aa)) enclose the RRM domain. A DAZ domain is found at 162 to 187 (TYAYSSPAVLIQQQVPVGYQPAYNYQ).

This sequence belongs to the RRM DAZ family.

It is found in the cytoplasm. Its function is as follows. RNA-binding protein, which probably plays a central role in gametogenesis in both males and females. Acts by binding to the 3'-UTR of mRNA, specifically recognizing GUU triplets, and promoting the translation of key transcripts. This Gallus gallus (Chicken) protein is Deleted in azoospermia-like (DAZL).